A 63-amino-acid chain; its full sequence is Venom peptide 2a (63 aa).

The first 22 residues, 1-22 (MRGTSFILFAVVVILGFLNANA), serve as a signal peptide directing secretion. 5 AXPX repeats span residues 22–25 (AEPL), 26–29 (ANPA), 32–35 (ANPD), 38–41 (ANPD), and 44–47 (ANPE). The propeptide occupies 23 to 48 (EPLANPAPLANPDPLANPDPLANPEA). Residue Leu62 is modified to Leucine amide.

As to expression, expressed by the venom gland.

The protein resides in the secreted. The protein localises to the target cell membrane. In terms of biological role, antimicrobial peptide. Shows activities against Gram-positive bacteria (S.aureus MIC=50 uM and 200 ug/ml, and B.subtilis MIC=200 ug/ml), Gram-negative bacterium E.coli (MIC=100 uM and 200 ug/ml) and fungi (B.cinerea MIC=5 uM, S.cerevisiae MIC=128 ug/ml, S.pombe MIC=128 ug/ml, A.nidulans MIC=128 ug/ml, and C.albicans MIC=64-100 uM). Shows cytolytic activity against insect cell lines. Its hemolytic activity is controversial, as Baek and colleagues report no activity while Bea and colleagues note a hemolytic activity. In vivo, peptide injection in the vicinity of the head and thorax of lepidopteran larvae induces feeding disorder followed by death due to starvation. Is weakly lethal when tested on water flies (D.magna), but is not lethal on lady beetles (H.convergens). The protein is Venom peptide 2a of Eumenes pomiformis (Potter wasp).